The following is a 25-amino-acid chain: Xenoposin precursor fragment R2 (25 aa).

As to expression, expressed by the skin glands.

The protein resides in the secreted. Antimicrobial peptide. The sequence is that of Xenoposin precursor fragment R2 from Xenopus ruwenzoriensis (Uganda clawed frog).